Here is a 400-residue protein sequence, read N- to C-terminus: Sensory histidine kinase/phosphatase NtrB (400 aa).

Composition is skewed to low complexity over residues 1-10 and 18-27; these read MARASAAAPL and RAPSSSYRPV. The interval 1 to 27 is disordered; the sequence is MARASAAAPLPRRPARPRAPSSSYRPV. The 71-residue stretch at 29 to 99 folds into the PAS domain; it reads PCIDPSVMLN…IEQVQQGRHR (71 aa). Positions 163–381 constitute a Histidine kinase domain; it reads MLGHEVKNPL…VFKVSLPMFD (219 aa). At His166 the chain carries Phosphohistidine; by autocatalysis.

In terms of processing, autophosphorylated.

The protein resides in the cytoplasm. It carries out the reaction ATP + protein L-histidine = ADP + protein N-phospho-L-histidine.. Functionally, member of the two-component regulatory system NtrB/NtrC, which controls expression of the nitrogen-regulated (ntr) genes in response to nitrogen limitation. Under conditions of nitrogen limitation, NtrB autophosphorylates and transfers the phosphoryl group to NtrC. In the presence of nitrogen, acts as a phosphatase that dephosphorylates and inactivates NtrC. The protein is Sensory histidine kinase/phosphatase NtrB of Azospirillum brasilense.